A 331-amino-acid chain; its full sequence is Ribosomal RNA small subunit methyltransferase C (331 aa).

Belongs to the methyltransferase superfamily. RsmC family. Monomer.

The protein resides in the cytoplasm. It catalyses the reaction guanosine(1207) in 16S rRNA + S-adenosyl-L-methionine = N(2)-methylguanosine(1207) in 16S rRNA + S-adenosyl-L-homocysteine + H(+). Its function is as follows. Specifically methylates the guanine in position 1207 of 16S rRNA in the 30S particle. The chain is Ribosomal RNA small subunit methyltransferase C from Pseudomonas putida (strain W619).